The sequence spans 332 residues: 4-hydroxy-3-methylbut-2-enyl diphosphate reductase (332 aa).

Residue Cys13 coordinates [4Fe-4S] cluster. (2E)-4-hydroxy-3-methylbut-2-enyl diphosphate is bound by residues His41 and His75. 2 residues coordinate dimethylallyl diphosphate: His41 and His75. Residues His41 and His75 each coordinate isopentenyl diphosphate. Cys97 serves as a coordination point for [4Fe-4S] cluster. His125 is a binding site for (2E)-4-hydroxy-3-methylbut-2-enyl diphosphate. Position 125 (His125) interacts with dimethylallyl diphosphate. Isopentenyl diphosphate is bound at residue His125. Glu127 serves as the catalytic Proton donor. Residue Thr168 coordinates (2E)-4-hydroxy-3-methylbut-2-enyl diphosphate. A [4Fe-4S] cluster-binding site is contributed by Cys229. Positions 257, 258, 259, and 306 each coordinate (2E)-4-hydroxy-3-methylbut-2-enyl diphosphate. 4 residues coordinate dimethylallyl diphosphate: Ser257, Ser258, Asn259, and Ser306. 4 residues coordinate isopentenyl diphosphate: Ser257, Ser258, Asn259, and Ser306.

This sequence belongs to the IspH family. [4Fe-4S] cluster serves as cofactor.

It carries out the reaction isopentenyl diphosphate + 2 oxidized [2Fe-2S]-[ferredoxin] + H2O = (2E)-4-hydroxy-3-methylbut-2-enyl diphosphate + 2 reduced [2Fe-2S]-[ferredoxin] + 2 H(+). It catalyses the reaction dimethylallyl diphosphate + 2 oxidized [2Fe-2S]-[ferredoxin] + H2O = (2E)-4-hydroxy-3-methylbut-2-enyl diphosphate + 2 reduced [2Fe-2S]-[ferredoxin] + 2 H(+). It participates in isoprenoid biosynthesis; dimethylallyl diphosphate biosynthesis; dimethylallyl diphosphate from (2E)-4-hydroxy-3-methylbutenyl diphosphate: step 1/1. The protein operates within isoprenoid biosynthesis; isopentenyl diphosphate biosynthesis via DXP pathway; isopentenyl diphosphate from 1-deoxy-D-xylulose 5-phosphate: step 6/6. Functionally, catalyzes the conversion of 1-hydroxy-2-methyl-2-(E)-butenyl 4-diphosphate (HMBPP) into a mixture of isopentenyl diphosphate (IPP) and dimethylallyl diphosphate (DMAPP). Acts in the terminal step of the DOXP/MEP pathway for isoprenoid precursor biosynthesis. The sequence is that of 4-hydroxy-3-methylbut-2-enyl diphosphate reductase from Chlorobaculum tepidum (strain ATCC 49652 / DSM 12025 / NBRC 103806 / TLS) (Chlorobium tepidum).